The primary structure comprises 155 residues: 3-hydroxyacyl-[acyl-carrier-protein] dehydratase FabZ (155 aa).

Residue H54 is part of the active site.

This sequence belongs to the thioester dehydratase family. FabZ subfamily.

It localises to the cytoplasm. The enzyme catalyses a (3R)-hydroxyacyl-[ACP] = a (2E)-enoyl-[ACP] + H2O. In terms of biological role, involved in unsaturated fatty acids biosynthesis. Catalyzes the dehydration of short chain beta-hydroxyacyl-ACPs and long chain saturated and unsaturated beta-hydroxyacyl-ACPs. In Burkholderia ambifaria (strain MC40-6), this protein is 3-hydroxyacyl-[acyl-carrier-protein] dehydratase FabZ.